Consider the following 158-residue polypeptide: Protein ORF4 (158 aa).

Acts by interacting with multiple viral and host proteins to enhance the activity of viral RNA-dependent RNA polymerase. The protein is Protein ORF4 of Hepatitis E virus genotype 1 (isolate Human/Pakistan/Sar-55) (HEV-1).